A 99-amino-acid chain; its full sequence is RNA-binding protein HI_1333 (99 aa).

The 97-residue stretch at 2–98 (TTLSTKQKQF…SEEAKIQLPR (97 aa)) folds into the CRM domain.

The polypeptide is RNA-binding protein HI_1333 (Haemophilus influenzae (strain ATCC 51907 / DSM 11121 / KW20 / Rd)).